The sequence spans 160 residues: Endoribonuclease YbeY (160 aa).

Zn(2+) contacts are provided by His-112, His-116, and His-122.

Belongs to the endoribonuclease YbeY family. Zn(2+) is required as a cofactor.

The protein localises to the cytoplasm. Its function is as follows. Single strand-specific metallo-endoribonuclease involved in late-stage 70S ribosome quality control and in maturation of the 3' terminus of the 16S rRNA. This chain is Endoribonuclease YbeY, found in Maricaulis maris (strain MCS10) (Caulobacter maris).